Reading from the N-terminus, the 767-residue chain is 5-methyltetrahydropteroyltriglutamate--homocysteine methyltransferase (767 aa).

K126 is a 5-methyltetrahydropteroyltri-L-glutamate binding site. Residues 445-447 and E498 contribute to the L-homocysteine site; that span reads IGS. Residues 445 to 447 and E498 each bind L-methionine; that span reads IGS. 5-methyltetrahydropteroyltri-L-glutamate-binding positions include 529-530 and W575; that span reads RC. D613 provides a ligand contact to L-homocysteine. D613 provides a ligand contact to L-methionine. Residue E619 coordinates 5-methyltetrahydropteroyltri-L-glutamate. Positions 655, 657, and 679 each coordinate Zn(2+). H708 acts as the Proton donor in catalysis. C740 contributes to the Zn(2+) binding site.

The protein belongs to the vitamin-B12 independent methionine synthase family. Requires Zn(2+) as cofactor.

It carries out the reaction 5-methyltetrahydropteroyltri-L-glutamate + L-homocysteine = tetrahydropteroyltri-L-glutamate + L-methionine. It functions in the pathway amino-acid biosynthesis; L-methionine biosynthesis via de novo pathway; L-methionine from L-homocysteine (MetE route): step 1/1. In terms of biological role, catalyzes the transfer of a methyl group from 5-methyltetrahydrofolate to homocysteine resulting in methionine formation. The polypeptide is 5-methyltetrahydropteroyltriglutamate--homocysteine methyltransferase (Psychromonas ingrahamii (strain DSM 17664 / CCUG 51855 / 37)).